Consider the following 493-residue polypeptide: Cytoplasmic tRNA 2-thiolation protein 2 (493 aa).

The residue at position 489 (Ser489) is a Phosphoserine.

It belongs to the CTU2/NCS2 family. Interacts with NCS6 and URM1. May act by forming a heterodimer with NCS6.

The protein localises to the cytoplasm. The protein operates within tRNA modification; 5-methoxycarbonylmethyl-2-thiouridine-tRNA biosynthesis. Functionally, plays a central role in 2-thiolation of mcm(5)S(2)U at tRNA wobble positions of tRNA(Lys), tRNA(Glu) and tRNA(Gln). May act by forming a heterodimer with NCS6 that ligates sulfur from thiocarboxylated URM1 onto the uridine of tRNAs at wobble position. Prior mcm(5) tRNA modification by the elongator complex is required for 2-thiolation. May also be involved in protein urmylation. This chain is Cytoplasmic tRNA 2-thiolation protein 2, found in Saccharomyces cerevisiae (strain AWRI1631) (Baker's yeast).